A 418-amino-acid chain; its full sequence is Tyrosine--tRNA ligase 1 (418 aa).

Tyr34 is an L-tyrosine binding site. Positions 39–48 match the 'HIGH' region motif; the sequence is PTGDSMHIGH. Residues Tyr166 and Gln170 each contribute to the L-tyrosine site. Residues 228–232 carry the 'KMSKS' region motif; sequence KFGKT. Residue Lys231 participates in ATP binding. The region spanning 350 to 416 is the S4 RNA-binding domain; the sequence is KNIVDWLVDT…GKKNYFLAKV (67 aa).

This sequence belongs to the class-I aminoacyl-tRNA synthetase family. TyrS type 1 subfamily. Homodimer.

The protein localises to the cytoplasm. The enzyme catalyses tRNA(Tyr) + L-tyrosine + ATP = L-tyrosyl-tRNA(Tyr) + AMP + diphosphate + H(+). Its function is as follows. Catalyzes the attachment of tyrosine to tRNA(Tyr) in a two-step reaction: tyrosine is first activated by ATP to form Tyr-AMP and then transferred to the acceptor end of tRNA(Tyr). The chain is Tyrosine--tRNA ligase 1 from Enterococcus faecalis (strain ATCC 700802 / V583).